Here is a 445-residue protein sequence, read N- to C-terminus: Tubulin beta-4 chain (445 aa).

An MREI motif motif is present at residues 1–4 (MREI). Glutamine 11, glutamate 69, serine 138, glycine 142, threonine 143, glycine 144, asparagine 204, and asparagine 226 together coordinate GTP. Position 69 (glutamate 69) interacts with Mg(2+). The segment at 425-445 (YQDATAEEEGEFEEGEEEENA) is disordered. The span at 429 to 445 (TAEEEGEFEEGEEEENA) shows a compositional bias: acidic residues. Glutamate 438 bears the 5-glutamyl polyglutamate mark.

It belongs to the tubulin family. Dimer of alpha and beta chains. A typical microtubule is a hollow water-filled tube with an outer diameter of 25 nm and an inner diameter of 15 nM. Alpha-beta heterodimers associate head-to-tail to form protofilaments running lengthwise along the microtubule wall with the beta-tubulin subunit facing the microtubule plus end conferring a structural polarity. Microtubules usually have 13 protofilaments but different protofilament numbers can be found in some organisms and specialized cells. The cofactor is Mg(2+). In terms of processing, some glutamate residues at the C-terminus are polyglycylated, resulting in polyglycine chains on the gamma-carboxyl group. Glycylation is mainly limited to tubulin incorporated into axonemes (cilia and flagella) whereas glutamylation is prevalent in neuronal cells, centrioles, axonemes, and the mitotic spindle. Both modifications can coexist on the same protein on adjacent residues, and lowering polyglycylation levels increases polyglutamylation, and reciprocally. The precise function of polyglycylation is still unclear. Post-translationally, some glutamate residues at the C-terminus are polyglutamylated, resulting in polyglutamate chains on the gamma-carboxyl group. Polyglutamylation plays a key role in microtubule severing by spastin (SPAST). SPAST preferentially recognizes and acts on microtubules decorated with short polyglutamate tails: severing activity by SPAST increases as the number of glutamates per tubulin rises from one to eight, but decreases beyond this glutamylation threshold. Preferential expression in germ cells.

Its subcellular location is the cytoplasm. The protein resides in the cytoskeleton. In terms of biological role, tubulin is the major constituent of microtubules, a cylinder consisting of laterally associated linear protofilaments composed of alpha- and beta-tubulin heterodimers. Microtubules grow by the addition of GTP-tubulin dimers to the microtubule end, where a stabilizing cap forms. Below the cap, tubulin dimers are in GDP-bound state, owing to GTPase activity of alpha-tubulin. The polypeptide is Tubulin beta-4 chain (tubb4) (Xenopus laevis (African clawed frog)).